Reading from the N-terminus, the 500-residue chain is Cytochrome P450 monooxygenase astJ (500 aa).

Cys440 is a heme binding site.

It belongs to the cytochrome P450 family. Heme is required as a cofactor.

The protein operates within secondary metabolite biosynthesis; terpenoid biosynthesis. Its function is as follows. Cytochrome P450 monooxygenase; part of the gene cluster that mediates the biosynthesis of astellolides, drimane-type sesquiterpene esters that show antimicrobial, anti-inflammatory, and anti-tumor activities. The first step in astellolide biosynthesis is performed by the sesquiterpene cyclase astC that catalyzes the formation of drimanyl pyrophosphate from farnesyl pyrophosphate. Drimanyl pyrophosphate is then dephosphorylated by the sesquiterpene phosphatase astI to produce drimanyl monophosphate which is further dephosphorylated to drim-8-ene-11-ol by atsK. Drim-8-ene-11-ol is converted to confertifolin, probably by the cytochrome P450 monooxygenase astD and/or the dehydrogenase astE. The cytochrome P450 monooxygenases astB, astF and astJ then hydroxylate confertifolin at C6, C14, or C15 to form trihydroxy confertifolin. The nonribosomal peptide synthetase astA catalyzes ester bond formation between trihydroxy contifolin and benzoic acid (BA) or 4-hydroxy benzoic acid (4HBA), leading to the formation of dideacetyl astellolides A and B, respectively. Finally, the O-acetyltransferase astG converts dideacetyl astellolides A and B into deacetyl astellolides A and B. The sequence is that of Cytochrome P450 monooxygenase astJ from Aspergillus oryzae (strain ATCC 42149 / RIB 40) (Yellow koji mold).